The following is a 478-amino-acid chain: NADH-ubiquinone oxidoreductase 49 kDa subunit, mitochondrial (478 aa).

A mitochondrion-targeting transit peptide spans 1-42 (MATTLFRLAGRNAKRHCMRQSTTIAHNLNSTRAFSASALRRY). [4Fe-4S] cluster-binding residues include cysteine 341, cysteine 347, and cysteine 362.

It belongs to the complex I 49 kDa subunit family. Complex I is composed of about 40 different subunits. [4Fe-4S] cluster is required as a cofactor.

It is found in the mitochondrion inner membrane. The catalysed reaction is a ubiquinone + NADH + 5 H(+)(in) = a ubiquinol + NAD(+) + 4 H(+)(out). Functionally, core subunit of the mitochondrial membrane respiratory chain NADH dehydrogenase (Complex I) that is believed to belong to the minimal assembly required for catalysis. Complex I functions in the transfer of electrons from NADH to the respiratory chain. The immediate electron acceptor for the enzyme is believed to be ubiquinone. This is NADH-ubiquinone oxidoreductase 49 kDa subunit, mitochondrial (nuo-49) from Neurospora crassa (strain ATCC 24698 / 74-OR23-1A / CBS 708.71 / DSM 1257 / FGSC 987).